We begin with the raw amino-acid sequence, 293 residues long: tRNA pseudouridine synthase B (293 aa).

The active-site Nucleophile is Asp39.

The protein belongs to the pseudouridine synthase TruB family. Type 1 subfamily.

The enzyme catalyses uridine(55) in tRNA = pseudouridine(55) in tRNA. Responsible for synthesis of pseudouridine from uracil-55 in the psi GC loop of transfer RNAs. The chain is tRNA pseudouridine synthase B from Rickettsia bellii (strain OSU 85-389).